The following is a 346-amino-acid chain: tRNA N6-adenosine threonylcarbamoyltransferase (346 aa).

Fe cation contacts are provided by His111 and His115. Substrate-binding positions include 134–138 (LVSGG), Asp167, Gly180, and Asn279. Position 307 (Asp307) interacts with Fe cation.

Belongs to the KAE1 / TsaD family. The cofactor is Fe(2+).

The protein localises to the cytoplasm. It catalyses the reaction L-threonylcarbamoyladenylate + adenosine(37) in tRNA = N(6)-L-threonylcarbamoyladenosine(37) in tRNA + AMP + H(+). Required for the formation of a threonylcarbamoyl group on adenosine at position 37 (t(6)A37) in tRNAs that read codons beginning with adenine. Is involved in the transfer of the threonylcarbamoyl moiety of threonylcarbamoyl-AMP (TC-AMP) to the N6 group of A37, together with TsaE and TsaB. TsaD likely plays a direct catalytic role in this reaction. This is tRNA N6-adenosine threonylcarbamoyltransferase from Burkholderia ambifaria (strain MC40-6).